A 248-amino-acid polypeptide reads, in one-letter code: Probable transcriptional regulatory protein Acid345_2125 (248 aa).

It belongs to the TACO1 family.

It is found in the cytoplasm. This is Probable transcriptional regulatory protein Acid345_2125 from Koribacter versatilis (strain Ellin345).